Here is a 41-residue protein sequence, read N- to C-terminus: U3-theraphotoxin-Hs1a (41 aa).

3 cysteine pairs are disulfide-bonded: C2/C16, C9/C37, and C17/C40.

This sequence belongs to the neurotoxin 14 (magi-1) family. 01 (HNTX-16) subfamily. Expressed by the venom gland.

It localises to the secreted. Its function is as follows. Intracerebroventricular injection paralyzes mice. Has no effect on voltage-gated sodium currents. This is U3-theraphotoxin-Hs1a from Cyriopagopus schmidti (Chinese bird spider).